A 588-amino-acid polypeptide reads, in one-letter code: Outer membrane transporter CdiB (588 aa).

Residues 33–55 traverse the membrane as a helical segment; it reads VVRYFSLLPCLCILSFSSPAAML. The POTRA domain maps to 104 to 179; that stretch reads FTVSRIVVSG…GVLHITVMEG (76 aa).

This sequence belongs to the TPS (TC 1.B.20) family.

The protein resides in the cell outer membrane. Potential outer membrane protein component of a toxin-immunity protein module, which functions as a cellular contact-dependent growth inhibition (CDI) system. CDI modules allow bacteria to communicate with and inhibit the growth of closely related neighboring bacteria in a contact-dependent fashion. This protein may be required for secretion and assembly of the CdiA toxin protein. In terms of biological role, probable member of a two partner secretion pathway (TPS) in which it mediates the secretion of CdiA. This is Outer membrane transporter CdiB from Escherichia coli O6:K15:H31 (strain 536 / UPEC).